We begin with the raw amino-acid sequence, 940 residues long: UvrABC system protein A (940 aa).

31–38 (GLSGSGKS) serves as a coordination point for ATP. Residues 252 to 279 (CPHCGYSMRELEPRLFSFNNPAGACPTC) form a C4-type zinc finger. ABC transporter domains are found at residues 309-586 (WDQK…PNSL) and 606-936 (KDAK…RFLK). 639 to 646 (GVSGSGKS) contributes to the ATP binding site. The C4-type zinc-finger motif lies at 739–765 (CEACQGDGVIKVEMHFLPDVYVPCDVC).

It belongs to the ABC transporter superfamily. UvrA family. As to quaternary structure, forms a heterotetramer with UvrB during the search for lesions.

It localises to the cytoplasm. In terms of biological role, the UvrABC repair system catalyzes the recognition and processing of DNA lesions. UvrA is an ATPase and a DNA-binding protein. A damage recognition complex composed of 2 UvrA and 2 UvrB subunits scans DNA for abnormalities. When the presence of a lesion has been verified by UvrB, the UvrA molecules dissociate. The polypeptide is UvrABC system protein A (Vibrio cholerae serotype O1 (strain ATCC 39315 / El Tor Inaba N16961)).